The sequence spans 332 residues: Glycerol-3-phosphate dehydrogenase [NAD(P)+] (332 aa).

NADPH-binding residues include Trp11, Arg30, and Lys108. Positions 108, 137, and 139 each coordinate sn-glycerol 3-phosphate. Ala141 contributes to the NADPH binding site. Positions 192, 245, 255, 256, and 257 each coordinate sn-glycerol 3-phosphate. The active-site Proton acceptor is Lys192. Position 256 (Arg256) interacts with NADPH. NADPH contacts are provided by Val280 and Glu282.

It belongs to the NAD-dependent glycerol-3-phosphate dehydrogenase family.

The protein localises to the cytoplasm. The enzyme catalyses sn-glycerol 3-phosphate + NAD(+) = dihydroxyacetone phosphate + NADH + H(+). The catalysed reaction is sn-glycerol 3-phosphate + NADP(+) = dihydroxyacetone phosphate + NADPH + H(+). The protein operates within membrane lipid metabolism; glycerophospholipid metabolism. Its function is as follows. Catalyzes the reduction of the glycolytic intermediate dihydroxyacetone phosphate (DHAP) to sn-glycerol 3-phosphate (G3P), the key precursor for phospholipid synthesis. The sequence is that of Glycerol-3-phosphate dehydrogenase [NAD(P)+] from Burkholderia pseudomallei (strain 1710b).